Reading from the N-terminus, the 160-residue chain is Major allergen Pru av 1 (160 aa).

The protein belongs to the BetVI family.

In Prunus avium (Cherry), this protein is Major allergen Pru av 1 (PRUA1).